A 207-amino-acid polypeptide reads, in one-letter code: Chaperone protein TorD (207 aa).

This sequence belongs to the TorD/DmsD family. TorD subfamily.

The protein localises to the cytoplasm. Functionally, involved in the biogenesis of TorA. Acts on TorA before the insertion of the molybdenum cofactor and, as a result, probably favors a conformation of the apoenzyme that is competent for acquiring the cofactor. This Aggregatibacter aphrophilus (strain NJ8700) (Haemophilus aphrophilus) protein is Chaperone protein TorD.